The following is a 169-amino-acid chain: MTPYAVAITVALLIVTVSALQVNNSCVAFPPSNLRGKNGDGTNEQYATALLSIPWNGPPESLRDINLIELEPQVALYLLENYINHYYNTTRDNKCPNNHYLMGGQLGSSSDNRSLNDPQTMLWPEKKEDEKNCQETFKGACSCTKRFCKGYFSVNIFGINLNISYSSGK.

Its function is as follows. Involved in the unfolded protein response (UPR), a transcriptional response which up-regulates genes that enable cells to cope with misfolded, endoplasmic reticulum-retained proteins. UPR is part of the endoplasmic reticulum quality control (ERQC) which prevents the exit of misfolded secretory and membrane proteins from the endoplasmic reticulum. The sequence is that of Unfolded protein response-inducible protein 1 (ULI1) from Saccharomyces cerevisiae (strain ATCC 204508 / S288c) (Baker's yeast).